A 292-amino-acid chain; its full sequence is 33 kDa chaperonin (292 aa).

2 disulfide bridges follow: C230–C232 and C263–C266.

The protein belongs to the HSP33 family. Under oxidizing conditions two disulfide bonds are formed involving the reactive cysteines. Under reducing conditions zinc is bound to the reactive cysteines and the protein is inactive.

The protein localises to the cytoplasm. Redox regulated molecular chaperone. Protects both thermally unfolding and oxidatively damaged proteins from irreversible aggregation. Plays an important role in the bacterial defense system toward oxidative stress. This Enterobacter sp. (strain 638) protein is 33 kDa chaperonin.